The following is a 439-amino-acid chain: Ribosomal protein uS12 methylthiotransferase RimO (439 aa).

In terms of domain architecture, MTTase N-terminal spans Gln-7–Phe-122. The [4Fe-4S] cluster site is built by Cys-16, Cys-52, Cys-85, Cys-155, Cys-159, and Cys-162. In terms of domain architecture, Radical SAM core spans Ser-141–Lys-369.

This sequence belongs to the methylthiotransferase family. RimO subfamily. The cofactor is [4Fe-4S] cluster.

It is found in the cytoplasm. The enzyme catalyses L-aspartate(89)-[ribosomal protein uS12]-hydrogen + (sulfur carrier)-SH + AH2 + 2 S-adenosyl-L-methionine = 3-methylsulfanyl-L-aspartate(89)-[ribosomal protein uS12]-hydrogen + (sulfur carrier)-H + 5'-deoxyadenosine + L-methionine + A + S-adenosyl-L-homocysteine + 2 H(+). In terms of biological role, catalyzes the methylthiolation of an aspartic acid residue of ribosomal protein uS12. The chain is Ribosomal protein uS12 methylthiotransferase RimO from Endomicrobium trichonymphae.